A 115-amino-acid polypeptide reads, in one-letter code: DNA-binding protein NP_4416A (115 aa).

Residues 1-11 show a composition bias toward acidic residues; that stretch reads MSGEPTDEDLE. A disordered region spans residues 1 to 46; that stretch reads MSGEPTDEDLEELRKKKMEQLKEQGGEGQSEAAEAQRQQAEAQKKA. Over residues 12-25 the composition is skewed to basic and acidic residues; the sequence is ELRKKKMEQLKEQG. Residues 29–41 show a composition bias toward low complexity; sequence QSEAAEAQRQQAE.

It belongs to the PDCD5 family.

The chain is DNA-binding protein NP_4416A from Natronomonas pharaonis (strain ATCC 35678 / DSM 2160 / CIP 103997 / JCM 8858 / NBRC 14720 / NCIMB 2260 / Gabara) (Halobacterium pharaonis).